An 83-amino-acid chain; its full sequence is MRKGIHPDYQEVVFMDSATGAKFVAGSTLKPEETIEFEGKTYPLVRVEISSDSHPFYTGKQKFAQADGRIEKFNKKYGISSKN.

It belongs to the bacterial ribosomal protein bL31 family. Type B subfamily. As to quaternary structure, part of the 50S ribosomal subunit.

This chain is Large ribosomal subunit protein bL31B, found in Lactobacillus gasseri (strain ATCC 33323 / DSM 20243 / BCRC 14619 / CIP 102991 / JCM 1131 / KCTC 3163 / NCIMB 11718 / NCTC 13722 / AM63).